Here is a 281-residue protein sequence, read N- to C-terminus: Pantothenate synthetase (281 aa).

30–37 (MGNLHLGH) contacts ATP. The Proton donor role is filled by H37. Q61 contributes to the (R)-pantoate binding site. Q61 provides a ligand contact to beta-alanine. ATP is bound at residue 149-152 (GRKD). (R)-pantoate is bound at residue Q155. ATP is bound by residues I178 and 186-189 (MSSR).

It belongs to the pantothenate synthetase family. In terms of assembly, homodimer.

The protein localises to the cytoplasm. The enzyme catalyses (R)-pantoate + beta-alanine + ATP = (R)-pantothenate + AMP + diphosphate + H(+). Its pathway is cofactor biosynthesis; (R)-pantothenate biosynthesis; (R)-pantothenate from (R)-pantoate and beta-alanine: step 1/1. Its function is as follows. Catalyzes the condensation of pantoate with beta-alanine in an ATP-dependent reaction via a pantoyl-adenylate intermediate. The sequence is that of Pantothenate synthetase from Shewanella sediminis (strain HAW-EB3).